The chain runs to 509 residues: Bifunctional purine biosynthesis protein PurH (509 aa).

The 145-residue stretch at 1-145 (MIKRALISVF…KSFKDVVVIS (145 aa)) folds into the MGS-like domain.

Belongs to the PurH family.

The enzyme catalyses (6R)-10-formyltetrahydrofolate + 5-amino-1-(5-phospho-beta-D-ribosyl)imidazole-4-carboxamide = 5-formamido-1-(5-phospho-D-ribosyl)imidazole-4-carboxamide + (6S)-5,6,7,8-tetrahydrofolate. The catalysed reaction is IMP + H2O = 5-formamido-1-(5-phospho-D-ribosyl)imidazole-4-carboxamide. It participates in purine metabolism; IMP biosynthesis via de novo pathway; 5-formamido-1-(5-phospho-D-ribosyl)imidazole-4-carboxamide from 5-amino-1-(5-phospho-D-ribosyl)imidazole-4-carboxamide (10-formyl THF route): step 1/1. The protein operates within purine metabolism; IMP biosynthesis via de novo pathway; IMP from 5-formamido-1-(5-phospho-D-ribosyl)imidazole-4-carboxamide: step 1/1. The protein is Bifunctional purine biosynthesis protein PurH of Brachyspira hyodysenteriae (strain ATCC 49526 / WA1).